Consider the following 339-residue polypeptide: Ketol-acid reductoisomerase (NADP(+)) (339 aa).

The 182-residue stretch at 1–182 folds into the KARI N-terminal Rossmann domain; sequence MRVYYDRDAD…GGGRAGIIET (182 aa). Residues 24-27, Arg48, Ser51, Thr53, and 83-86 each bind NADP(+); these read YGSQ and DELQ. His108 is a catalytic residue. Gly134 lines the NADP(+) pocket. The KARI C-terminal knotted domain maps to 183-328; that stretch reads TFREECETDL…AKLRAMMPWI (146 aa). Mg(2+) is bound by residues Asp191, Glu195, Glu227, and Glu231. Substrate is bound at residue Ser252.

Belongs to the ketol-acid reductoisomerase family. It depends on Mg(2+) as a cofactor.

The catalysed reaction is (2R)-2,3-dihydroxy-3-methylbutanoate + NADP(+) = (2S)-2-acetolactate + NADPH + H(+). It catalyses the reaction (2R,3R)-2,3-dihydroxy-3-methylpentanoate + NADP(+) = (S)-2-ethyl-2-hydroxy-3-oxobutanoate + NADPH + H(+). It functions in the pathway amino-acid biosynthesis; L-isoleucine biosynthesis; L-isoleucine from 2-oxobutanoate: step 2/4. Its pathway is amino-acid biosynthesis; L-valine biosynthesis; L-valine from pyruvate: step 2/4. In terms of biological role, involved in the biosynthesis of branched-chain amino acids (BCAA). Catalyzes an alkyl-migration followed by a ketol-acid reduction of (S)-2-acetolactate (S2AL) to yield (R)-2,3-dihydroxy-isovalerate. In the isomerase reaction, S2AL is rearranged via a Mg-dependent methyl migration to produce 3-hydroxy-3-methyl-2-ketobutyrate (HMKB). In the reductase reaction, this 2-ketoacid undergoes a metal-dependent reduction by NADPH to yield (R)-2,3-dihydroxy-isovalerate. This Methylocella silvestris (strain DSM 15510 / CIP 108128 / LMG 27833 / NCIMB 13906 / BL2) protein is Ketol-acid reductoisomerase (NADP(+)).